The chain runs to 467 residues: Glutamate--tRNA ligase (467 aa).

The short motif at Pro9–Gly19 is the 'HIGH' region element. Positions Lys237 to Arg241 match the 'KMSKS' region motif. Residue Lys240 coordinates ATP.

This sequence belongs to the class-I aminoacyl-tRNA synthetase family. Glutamate--tRNA ligase type 1 subfamily. As to quaternary structure, monomer.

It is found in the cytoplasm. The catalysed reaction is tRNA(Glu) + L-glutamate + ATP = L-glutamyl-tRNA(Glu) + AMP + diphosphate. Functionally, catalyzes the attachment of glutamate to tRNA(Glu) in a two-step reaction: glutamate is first activated by ATP to form Glu-AMP and then transferred to the acceptor end of tRNA(Glu). The chain is Glutamate--tRNA ligase from Xylella fastidiosa (strain 9a5c).